We begin with the raw amino-acid sequence, 1343 residues long: DNA-directed RNA polymerase subunit beta (1343 aa).

The protein belongs to the RNA polymerase beta chain family. In terms of assembly, the RNAP catalytic core consists of 2 alpha, 1 beta, 1 beta' and 1 omega subunit. When a sigma factor is associated with the core the holoenzyme is formed, which can initiate transcription.

The catalysed reaction is RNA(n) + a ribonucleoside 5'-triphosphate = RNA(n+1) + diphosphate. In terms of biological role, DNA-dependent RNA polymerase catalyzes the transcription of DNA into RNA using the four ribonucleoside triphosphates as substrates. The polypeptide is DNA-directed RNA polymerase subunit beta (Shewanella woodyi (strain ATCC 51908 / MS32)).